The following is a 491-amino-acid chain: Cytochrome P450 2B4 (491 aa).

At S128 the chain carries Phosphoserine; by PKA. C436 is a binding site for heme.

The protein belongs to the cytochrome P450 family. The cofactor is heme.

It localises to the endoplasmic reticulum membrane. It is found in the microsome membrane. It carries out the reaction an organic molecule + reduced [NADPH--hemoprotein reductase] + O2 = an alcohol + oxidized [NADPH--hemoprotein reductase] + H2O + H(+). Functionally, cytochromes P450 are a group of heme-thiolate monooxygenases. In liver microsomes, this enzyme is involved in an NADPH-dependent electron transport pathway. It oxidizes a variety of structurally unrelated compounds, including steroids, fatty acids, and xenobiotics. In the epoxidation of arachidonic acid it has a unique preference for the 5,6-olefin. In Oryctolagus cuniculus (Rabbit), this protein is Cytochrome P450 2B4 (CYP2B4).